The following is a 343-amino-acid chain: Protease inhibitor Egf1.5a (343 aa).

Residues 1 to 28 (MYIDTGIMSNNIFLFAFFALVGLTRIEA) form the signal peptide. The 53-residue stretch at 52–104 (CRENEHYNSTRIECEDECNDRNNKLCYRFQQFCWCNEGYIRNSSHICVKLEDC) folds into the TIL domain.

It belongs to the polydnaviridae EGF-like motif protein family. In terms of assembly, interacts with host PAP1, PAP3 and SPH2.

In terms of biological role, counteracts the host humoral immune response by inhibiting the processing and the amidolytic activity of host PAP1 and PAP3. Thereby, melanization of host hemolymph, normally producing several reactive intermediates toxic for viruses, is deregulated and proper immune response cannot occur. This Microplitis demolitor bracovirus (isolate Webb) (MdBV) protein is Protease inhibitor Egf1.5a (O1).